A 249-amino-acid polypeptide reads, in one-letter code: 5'-nucleotidase SurE (249 aa).

The a divalent metal cation site is built by D9, D10, S40, and N92.

Belongs to the SurE nucleotidase family. A divalent metal cation serves as cofactor.

It is found in the cytoplasm. It carries out the reaction a ribonucleoside 5'-phosphate + H2O = a ribonucleoside + phosphate. Its function is as follows. Nucleotidase that shows phosphatase activity on nucleoside 5'-monophosphates. The sequence is that of 5'-nucleotidase SurE from Shewanella baltica (strain OS223).